The sequence spans 408 residues: 1-deoxy-D-xylulose 5-phosphate reductoisomerase (408 aa).

The NADPH site is built by threonine 27, glycine 28, serine 29, isoleucine 30, alanine 53, arginine 54, asparagine 55, and asparagine 140. Lysine 141 provides a ligand contact to 1-deoxy-D-xylulose 5-phosphate. NADPH is bound at residue glutamate 142. Aspartate 166 contributes to the Mn(2+) binding site. Positions 167, 168, 192, and 215 each coordinate 1-deoxy-D-xylulose 5-phosphate. Glutamate 168 is a binding site for Mn(2+). Glycine 221 contributes to the NADPH binding site. 1-deoxy-D-xylulose 5-phosphate contacts are provided by serine 228, asparagine 233, lysine 234, and glutamate 237. Residue glutamate 237 participates in Mn(2+) binding.

It belongs to the DXR family. Mg(2+) serves as cofactor. The cofactor is Mn(2+).

The enzyme catalyses 2-C-methyl-D-erythritol 4-phosphate + NADP(+) = 1-deoxy-D-xylulose 5-phosphate + NADPH + H(+). It participates in isoprenoid biosynthesis; isopentenyl diphosphate biosynthesis via DXP pathway; isopentenyl diphosphate from 1-deoxy-D-xylulose 5-phosphate: step 1/6. Catalyzes the NADPH-dependent rearrangement and reduction of 1-deoxy-D-xylulose-5-phosphate (DXP) to 2-C-methyl-D-erythritol 4-phosphate (MEP). The sequence is that of 1-deoxy-D-xylulose 5-phosphate reductoisomerase from Nitratidesulfovibrio vulgaris (strain DP4) (Desulfovibrio vulgaris).